The chain runs to 457 residues: Argininosuccinate lyase (457 aa).

It belongs to the lyase 1 family. Argininosuccinate lyase subfamily.

The protein resides in the cytoplasm. It carries out the reaction 2-(N(omega)-L-arginino)succinate = fumarate + L-arginine. It functions in the pathway amino-acid biosynthesis; L-arginine biosynthesis; L-arginine from L-ornithine and carbamoyl phosphate: step 3/3. The protein is Argininosuccinate lyase of Yersinia pseudotuberculosis serotype IB (strain PB1/+).